Here is a 183-residue protein sequence, read N- to C-terminus: Holliday junction branch migration complex subunit RuvA (183 aa).

The domain I stretch occupies residues 1 to 64; sequence MVVGIEGIIT…EDSNKFYGFL (64 aa). The tract at residues 65–139 is domain II; it reads DKDEQKMFEM…DTKTKLENVS (75 aa). Residue serine 139 is a region of interest, flexible linker. Residues 139-183 are domain III; that stretch reads SDDKSEALAALLTLGFKQEKIISVLASAQATGTSELIKEALKKLG.

Belongs to the RuvA family. As to quaternary structure, homotetramer. Forms an RuvA(8)-RuvB(12)-Holliday junction (HJ) complex. HJ DNA is sandwiched between 2 RuvA tetramers; dsDNA enters through RuvA and exits via RuvB. An RuvB hexamer assembles on each DNA strand where it exits the tetramer. Each RuvB hexamer is contacted by two RuvA subunits (via domain III) on 2 adjacent RuvB subunits; this complex drives branch migration. In the full resolvosome a probable DNA-RuvA(4)-RuvB(12)-RuvC(2) complex forms which resolves the HJ.

The protein resides in the cytoplasm. The RuvA-RuvB-RuvC complex processes Holliday junction (HJ) DNA during genetic recombination and DNA repair, while the RuvA-RuvB complex plays an important role in the rescue of blocked DNA replication forks via replication fork reversal (RFR). RuvA specifically binds to HJ cruciform DNA, conferring on it an open structure. The RuvB hexamer acts as an ATP-dependent pump, pulling dsDNA into and through the RuvAB complex. HJ branch migration allows RuvC to scan DNA until it finds its consensus sequence, where it cleaves and resolves the cruciform DNA. In Campylobacter jejuni subsp. jejuni serotype O:23/36 (strain 81-176), this protein is Holliday junction branch migration complex subunit RuvA.